The sequence spans 335 residues: Protein MET1, chloroplastic (335 aa).

Low complexity predominate over residues 1 to 18; the sequence is MSLAPSSYPSLYSSPSLP. Disordered regions lie at residues 1–29 and 66–88; these read MSLA…NPSL and SETE…KYET. Residues 1–73 constitute a chloroplast transit peptide; that stretch reads MSLAPSSYPS…KASETESSAK (73 aa). Polar residues predominate over residues 19–29; that stretch reads RTQQTKQNPSL. Over residues 78 to 88 the composition is skewed to acidic residues; sequence GDGEEEEKYET. Residues 97–136 enclose the PDZ domain; that stretch reads YGLKFRKGRDGGTYIDAILPGGSADKTGKFTVGDRVIATS. TPR repeat units follow at residues 217–250, 254–287, and 289–323; these read REKD…KPTP, SVAS…GYED, and KRIR…ESAI.

In terms of assembly, interacts directly with stromal loops of photosystem II (PSII) core components psbB (CP47) and psbC (CP43). Associates with PSII subcomplexes formed during the PSII repair cycle (e.g. PSII dimers, PSII monomers, CP43-less PSII monomerand PSII reaction centers). Phosphorylated rapidly (e.g. within 5 minutes) but transiently at threonine and serine residues after wounding. Expressed in leaves (at protein level). Mostly expressed in leaves, stems and siliques, and, to a lower extent, in flowers and senescent leaves, but not present in roots (at protein level).

The protein localises to the plastid. It localises to the chloroplast membrane. The protein resides in the chloroplast thylakoid membrane. Its function is as follows. Involved in photosystem II supercomplex formation and repair, probably acting as a psbB/psbC chaperone on the stromal side of the membrane. The chain is Protein MET1, chloroplastic from Arabidopsis thaliana (Mouse-ear cress).